The following is a 146-amino-acid chain: Probable actin-related protein 2/3 complex subunit 5 (146 aa).

The protein belongs to the ARPC5 family. In terms of assembly, component of the Arp2/3 complex composed of ARP2, ARP3, ARPC1B/p41-ARC, ARPC2/p34-ARC, ARPC3/p21-ARC, ARPC4/p20-ARC and ARPC5/p16-ARC.

The protein localises to the cytoplasm. Its subcellular location is the cytoskeleton. Functions as a component of the Arp2/3 complex which is involved in regulation of actin polymerization and together with an activating nucleation-promoting factor (NPF) mediates the formation of branched actin networks. This chain is Probable actin-related protein 2/3 complex subunit 5, found in Caenorhabditis elegans.